The following is a 395-amino-acid chain: Protein maternal effect lethal 26 (395 aa).

The MATH domain occupies 41-162 (KVQHTWTVKN…RDMIIVNVEI (122 aa)). A BTB domain is found at 201–269 (CDFAINVNGK…IYCGRCNKDI (69 aa)).

In terms of assembly, interacts (via BTB domain) with cul-3. Seems to be a component of a E3 ubiquitin-protein ligase complex containing cul-3. Interacts (probably via MATH domain) with mei-1, which targets mei-1 for ubiquitin-mediated proteolysis. Interacts (probably via MATH domain) with ppfr-1, the regulatory subunit of the PP4 complex; targets ppfr-1 for ubiquitin-mediated proteolysis. May interact (via MATH domain) with unc-89 (via Ig-like C2-type domain 2/3 and, Ig-like C2-type domain 50 and fibronectin type-III domain 2). Expressed in body wall muscles.

It localises to the cytoplasm. The protein resides in the myofibril. Its subcellular location is the sarcomere. It is found in the m line. The protein localises to the i band. It functions in the pathway protein modification; protein ubiquitination. Probable substrate-specific adapter of an E3 ubiquitin-protein ligase complex which mediates the ubiquitination and subsequent proteasomal degradation of target proteins. Controls degradation of microtubule severing protein mei-1 after meiosis. Controls degradation of ppfr-1, the regulatory subunit of PP4 complex, after meiosis. In body wall muscles, involved in the organization of myosin thick filaments, likely by regulating the degradation of mei-1 downstream of unc-89. May also activate the TORC1 pathway. This chain is Protein maternal effect lethal 26 (mel-26), found in Caenorhabditis elegans.